The chain runs to 89 residues: Small ribosomal subunit protein uS15 (89 aa).

Residues 1-25 form a disordered region; the sequence is MSLDTTEKQQLINTHQTHGTDTGSA. Residues 8 to 25 show a composition bias toward polar residues; the sequence is KQQLINTHQTHGTDTGSA.

Belongs to the universal ribosomal protein uS15 family. In terms of assembly, part of the 30S ribosomal subunit. Forms a bridge to the 50S subunit in the 70S ribosome, contacting the 23S rRNA.

Functionally, one of the primary rRNA binding proteins, it binds directly to 16S rRNA where it helps nucleate assembly of the platform of the 30S subunit by binding and bridging several RNA helices of the 16S rRNA. Forms an intersubunit bridge (bridge B4) with the 23S rRNA of the 50S subunit in the ribosome. The polypeptide is Small ribosomal subunit protein uS15 (Parasynechococcus marenigrum (strain WH8102)).